Consider the following 133-residue polypeptide: Large ribosomal subunit protein bL20 (133 aa).

This sequence belongs to the bacterial ribosomal protein bL20 family.

Functionally, binds directly to 23S ribosomal RNA and is necessary for the in vitro assembly process of the 50S ribosomal subunit. It is not involved in the protein synthesizing functions of that subunit. This Mesorhizobium japonicum (strain LMG 29417 / CECT 9101 / MAFF 303099) (Mesorhizobium loti (strain MAFF 303099)) protein is Large ribosomal subunit protein bL20.